We begin with the raw amino-acid sequence, 1077 residues long: Semaphorin-5A (1077 aa).

Positions 1–21 (MKGACILAWLFSSLGVWRLAR) are cleaved as a signal peptide. Over 22-971 (PETQDPAKCQ…RCGEFNMFHM (950 aa)) the chain is Extracellular. The region spanning 35-484 (HPVVSYKEIG…LQEHVAKIPL (450 aa)) is the Sema domain. 2 disulfide bridges follow: cysteine 104/cysteine 114 and cysteine 131/cysteine 140. N-linked (GlcNAc...) asparagine glycosylation is found at asparagine 147, asparagine 168, asparagine 227, and asparagine 277. Intrachain disulfides connect cysteine 254–cysteine 357 and cysteine 278–cysteine 320. Asparagine 323 and asparagine 367 each carry an N-linked (GlcNAc...) asparagine glycan. Cystine bridges form between cysteine 487–cysteine 504 and cysteine 496–cysteine 513. N-linked (GlcNAc...) asparagine glycans are attached at residues asparagine 536 and asparagine 591. TSP type-1 domains lie at 540–593 (DGSF…TNCS), 595–651 (NGGW…LLCP), 653–702 (HVFW…NACP), 707–765 (TTPW…GCST), 784–839 (NGAW…LPCP), 841–896 (DGVW…QTCP), and 897–944 (ESWS…VFDS). Disulfide bonds link cysteine 607–cysteine 644, cysteine 611–cysteine 650, cysteine 622–cysteine 634, cysteine 665–cysteine 696, cysteine 669–cysteine 701, and cysteine 680–cysteine 686. Asparagine 717 carries an N-linked (GlcNAc...) asparagine glycan. 6 disulfides stabilise this stretch: cysteine 796/cysteine 833, cysteine 800/cysteine 838, cysteine 811/cysteine 823, cysteine 853/cysteine 890, cysteine 857/cysteine 895, and cysteine 868/cysteine 880. Residue asparagine 933 is glycosylated (N-linked (GlcNAc...) asparagine). A helical membrane pass occupies residues 972 to 992 (FHMMAVGLSSSILGCLLTLLV). The Cytoplasmic segment spans residues 993-1077 (YTYCQRYQQQ…FTDLNNYDEY (85 aa)).

Belongs to the semaphorin family. Binds PLXNB3. In adult, detected in liver, brain, kidney, heart, lung and spleen.

The protein localises to the membrane. Its function is as follows. Bifunctional axonal guidance cue regulated by sulfated proteoglycans; attractive effects result from interactions with heparan sulfate proteoglycans (HSPGs), while the inhibitory effects depend on interactions with chondroitin sulfate proteoglycans (CSPGs). Ligand for receptor PLXNB3. In glioma cells, SEMA5A stimulation of PLXNB3 results in the disassembly of F-actin stress fibers, disruption of focal adhesions and cellular collapse as well as inhibition of cell migration and invasion through ARHGDIA-mediated inactivation of RAC1. May promote angiogenesis by increasing endothelial cell proliferation and migration and inhibiting apoptosis. This Mus musculus (Mouse) protein is Semaphorin-5A (Sema5a).